The following is a 367-amino-acid chain: Glutamate 5-kinase (367 aa).

Residue Lys10 coordinates ATP. Ser50, Asp137, and Asn149 together coordinate substrate. ATP contacts are provided by residues 169 to 170 (TD) and 211 to 217 (TGGMATK). The region spanning 275-353 (AGEITVDDGA…QQISEILGYE (79 aa)) is the PUA domain.

It belongs to the glutamate 5-kinase family.

The protein localises to the cytoplasm. It carries out the reaction L-glutamate + ATP = L-glutamyl 5-phosphate + ADP. It participates in amino-acid biosynthesis; L-proline biosynthesis; L-glutamate 5-semialdehyde from L-glutamate: step 1/2. Catalyzes the transfer of a phosphate group to glutamate to form L-glutamate 5-phosphate. The protein is Glutamate 5-kinase of Yersinia enterocolitica serotype O:8 / biotype 1B (strain NCTC 13174 / 8081).